Here is a 294-residue protein sequence, read N- to C-terminus: MEQYEKVEKIGEGTYGVVYKARDRVTNETIALKKIRLEQEDEGVPSTAIREISLLKEMQHGNIVRLQDVVHSEKRLYLVFEYLDLDLKKHMDSCPEFSQDPRLVKMFLYQILRGIAYCHSHRVLHRDLKPQNLLIDRRTNALKLADFGLARAFGIPVRTFTHEVVTLWYRAPEILLGSRHYSTPVDVWSVGCIFAEMVNQRPLFPGDSEIDELFKIFRVMGTPNEETWPGVTSLPDFKSAFPKWPAKELAAVVPNLDASGLDLLDKMLRLDPSKRITARNALQHEYFKDIGFVP.

Residues 4–287 (YEKVEKIGEG…ARNALQHEYF (284 aa)) enclose the Protein kinase domain. ATP is bound by residues 10–18 (IGEGTYGVV) and K33. T14 carries the phosphothreonine modification. Position 15 is a phosphotyrosine (Y15). The active-site Proton acceptor is the D127. At T161 the chain carries Phosphothreonine; by CAK.

Belongs to the protein kinase superfamily. CMGC Ser/Thr protein kinase family. CDC2/CDKX subfamily.

The enzyme catalyses L-seryl-[protein] + ATP = O-phospho-L-seryl-[protein] + ADP + H(+). The catalysed reaction is L-threonyl-[protein] + ATP = O-phospho-L-threonyl-[protein] + ADP + H(+). It carries out the reaction [DNA-directed RNA polymerase] + ATP = phospho-[DNA-directed RNA polymerase] + ADP + H(+). Phosphorylation at Thr-14 or Tyr-15 inactivates the enzyme, while phosphorylation at Thr-161 activates it. In terms of biological role, plays a key role in the control of the eukaryotic cell cycle. The polypeptide is Cell division control protein 2 homolog A (CDC2A) (Antirrhinum majus (Garden snapdragon)).